The primary structure comprises 56 residues: Photosystem II assembly protein Psb34 (56 aa).

The Cytoplasmic portion of the chain corresponds to 1–33 (MRYTTDEGGRLNNFAIEPKVYQAQPWTPQQKVR). A helical membrane pass occupies residues 34-54 (AALLVGGGLLLVAGLVAIAVG). At 55-56 (VS) the chain is on the extracellular side.

In terms of assembly, part of photosystem II (PSII) assembly intermediate complex PSII-I; crystallized from a strain without psbJ, it forms monomeric PSII before addition of the oxygen evolving complex. PSII-I includes 3 assembly factors not found in mature PSII (Psb27, Psb28 and Psb34). The N-terminus of Psb34 (this protein) binds to CP47 (psbB) in close proximity to PsbH on the cytoplasmic face of PSII.

Its subcellular location is the cellular thylakoid membrane. Functionally, involved in photosystem II (PSII) assembly and/or repair, probably in conversion of late PSII assembly intermediates into mature dimeric PSII. In Thermosynechococcus vestitus (strain NIES-2133 / IAM M-273 / BP-1), this protein is Photosystem II assembly protein Psb34.